Here is a 177-residue protein sequence, read N- to C-terminus: uncharacterized protein (177 aa).

Low complexity-rich tracts occupy residues 78-93 (NNNNNNNNTINNNTNN) and 120-130 (SDVNSNNNNGN). The tract at residues 78–146 (NNNNNNNNTI…NKKLKKDGTN (69 aa)) is disordered. The segment covering 131-146 (HQKKKINKKLKKDGTN) has biased composition (basic residues).

This is an uncharacterized protein from Dictyostelium discoideum (Social amoeba).